The sequence spans 1160 residues: Protein translocase subunit SecA (1160 aa).

ATP contacts are provided by residues Q162 and 180–184 (GEGKT). A disordered region spans residues 342-362 (LLEEKEEAEEEGDSRRAQELE). Acidic residues predominate over residues 344 to 353 (EEKEEAEEEG). D726 contributes to the ATP binding site. The segment at 1060–1134 (EVQTEGQGPR…RNEYVTVRNN (75 aa)) is disordered. Polar residues predominate over residues 1074-1083 (QRNAQTQHDS). Residues 1104–1115 (AAERDPTVEEKQ) are compositionally biased toward basic and acidic residues.

Belongs to the SecA family. In terms of assembly, monomer and homodimer. Part of the essential Sec protein translocation apparatus which comprises SecA, SecYEG and auxiliary proteins SecDF. Other proteins may also be involved.

The protein localises to the cell inner membrane. It localises to the cytoplasm. The catalysed reaction is ATP + H2O + cellular proteinSide 1 = ADP + phosphate + cellular proteinSide 2.. Its function is as follows. Part of the Sec protein translocase complex. Interacts with the SecYEG preprotein conducting channel. Has a central role in coupling the hydrolysis of ATP to the transfer of proteins into and across the cell membrane, serving as an ATP-driven molecular motor driving the stepwise translocation of polypeptide chains across the membrane. This is Protein translocase subunit SecA from Salinibacter ruber (strain DSM 13855 / M31).